The following is a 623-amino-acid chain: Frizzled and smoothened-like protein M (623 aa).

An N-terminal signal peptide occupies residues 1–18 (MKSIFIIIFILYVFQVNS). The Extracellular portion of the chain corresponds to 19–243 (QTIYPIDPSG…WDQLYNLSNT (225 aa)). The FZ domain maps to 25-163 (DPSGKCEQYI…NYSEFNLTNY (139 aa)). Intrachain disulfides connect Cys-30-Cys-100 and Cys-42-Cys-93. Asn-57, Asn-106, Asn-109, Asn-154, Asn-159, Asn-169, Asn-199, and Asn-239 each carry an N-linked (GlcNAc...) asparagine glycan. Residues 244 to 264 (LAVLSTFGSLYLLVTFIILNP) form a helical membrane-spanning segment. Topologically, residues 265–273 (KVTSFDRMY) are cytoplasmic. Residues 274 to 294 (GFFNGSVFMMSLSGVILFIAG) traverse the membrane as a helical segment. Over 295 to 317 (GPRALIKDGGARISVFEDPLCSS) the chain is Extracellular. Residues 318-338 (TGFIFQLFAINAILFWAYMGF) traverse the membrane as a helical segment. The Cytoplasmic portion of the chain corresponds to 339–354 (DLWWRVKYITKPLNIQ). A helical membrane pass occupies residues 355–375 (KYYVPIAFTISFIFSVIPLAT). Topologically, residues 376-397 (KNYRMVRGNIHCWVHKAVLQNT) are extracellular. Residues 398 to 418 (LFFGPLGLTLTISTGFIGLVI) form a helical membrane-spanning segment. The Cytoplasmic segment spans residues 419-439 (YEIYKIVKATGRGGIMKLEIK). Residues 440 to 460 (PILNIVLIYFSFVYIFAFNFH) traverse the membrane as a helical segment. Over 461-494 (NDNNSKNTYGSIDEFFQCTLESDDPSKCTVGGPS) the chain is Extracellular. An N-linked (GlcNAc...) asparagine glycan is attached at Asn-463. A helical transmembrane segment spans residues 495–515 (IGSLGYFIYCIRIYGIYCFFL). The Cytoplasmic segment spans residues 516–623 (QGLNERAFKI…DIEIGSVNIK (108 aa)). The disordered stretch occupies residues 552 to 590 (PSESGNSSTTAGTSTTINNSNINKKNNNSKPTLSTMDSN). Residues 555–580 (SGNSSTTAGTSTTINNSNINKKNNNS) show a composition bias toward low complexity.

Belongs to the G-protein coupled receptor Fz/Smo family.

Its subcellular location is the membrane. The polypeptide is Frizzled and smoothened-like protein M (fslM-1) (Dictyostelium discoideum (Social amoeba)).